A 423-amino-acid polypeptide reads, in one-letter code: Isovaleryl-CoA dehydrogenase, mitochondrial (423 aa).

The N-terminal 29 residues, 1–29 (MATATRLLGWRVASWRMRPPPAGFVSQRA), are a transit peptide targeting the mitochondrion. An N6-acetyllysine; alternate mark is found at Lys55, Lys64, and Lys75. Residues Lys55, Lys64, and Lys75 each carry the N6-succinyllysine; alternate modification. FAD-binding positions include 162–171 (LAMSEPNAGS) and 195–197 (WIT). Ser171 serves as a coordination point for substrate. Residue 219–220 (SR) participates in substrate binding. Lys238 carries the post-translational modification N6-acetyllysine. Position 259 is an N6-acetyllysine; alternate (Lys259). N6-succinyllysine; alternate is present on Lys259. Substrate contacts are provided by residues Tyr274 and 281-284 (DLER). Glu283 (proton acceptor) is an active-site residue. Arg309 contacts FAD. Position 315 is an N6-succinyllysine (Lys315). Residues Gln320 and 377 to 381 (QCFGG) contribute to the FAD site. 404-405 (AG) provides a ligand contact to substrate. 406 to 408 (TSE) contacts FAD.

It belongs to the acyl-CoA dehydrogenase family. In terms of assembly, homotetramer. The cofactor is FAD.

Its subcellular location is the mitochondrion matrix. The catalysed reaction is 3-methylbutanoyl-CoA + oxidized [electron-transfer flavoprotein] + H(+) = 3-methylbut-2-enoyl-CoA + reduced [electron-transfer flavoprotein]. It catalyses the reaction pentanoyl-CoA + oxidized [electron-transfer flavoprotein] + H(+) = (2E)-pentenoyl-CoA + reduced [electron-transfer flavoprotein]. It carries out the reaction hexanoyl-CoA + oxidized [electron-transfer flavoprotein] + H(+) = (2E)-hexenoyl-CoA + reduced [electron-transfer flavoprotein]. The enzyme catalyses butanoyl-CoA + oxidized [electron-transfer flavoprotein] + H(+) = (2E)-butenoyl-CoA + reduced [electron-transfer flavoprotein]. It participates in amino-acid degradation; L-leucine degradation; (S)-3-hydroxy-3-methylglutaryl-CoA from 3-isovaleryl-CoA: step 1/3. Functionally, catalyzes the conversion of isovaleryl-CoA/3-methylbutanoyl-CoA to 3-methylbut-2-enoyl-CoA as an intermediate step in the leucine (Leu) catabolic pathway. To a lesser extent, is also able to catalyze the oxidation of other saturated short-chain acyl-CoA thioesters as pentanoyl-CoA, hexenoyl-CoA and butenoyl-CoA. The protein is Isovaleryl-CoA dehydrogenase, mitochondrial (IVD) of Pongo abelii (Sumatran orangutan).